A 319-amino-acid polypeptide reads, in one-letter code: Cell division protein FtsN (319 aa).

The segment at 1 to 30 is disordered; the sequence is MAQRDYVRRSQPAPSRRKKSTSRKKQRNLP. The Cytoplasmic segment spans residues 1-33; it reads MAQRDYVRRSQPAPSRRKKSTSRKKQRNLPAVS. The interval 4–6 is mediates interaction with FtsA; the sequence is RDY. Residues 15-27 are compositionally biased toward basic residues; the sequence is SRRKKSTSRKKQR. The chain crosses the membrane as a helical span at residues 34–54; that stretch reads PAMVAIAAAVLVTFIGGLYFI. Over 55–319 the chain is Periplasmic; sequence THHKKEESET…TNCIRLAAGG (265 aa). 2 disordered regions span residues 60-79 and 89-113; these read EESE…PPKP and LESR…TPEQ. Repeat copies occupy residues 115 to 120, 145 to 150, 197 to 200, and 220 to 223. The tract at residues 115-150 is 2 X 6 AA repeats; that stretch reads TPEQRQLLEQMQADMRQQPTQLVEVPWNEQTPEQRQ. Positions 140–245 are disordered; that stretch reads PWNEQTPEQR…PKPTAEKKDE (106 aa). Residues 143 to 171 show a composition bias toward low complexity; the sequence is EQTPEQRQQTLQRQRQAQQLAEQQRLAQQ. Residues 172-221 show a composition bias toward polar residues; sequence SRTTEQSWQQQTRTSQAAPVQAQPRQSKPASSQQPYQDLLQTPAHTTAQS. A 2 X 4 AA repeats region spans residues 197–223; sequence QSKPASSQQPYQDLLQTPAHTTAQSKP. Residues 222–238 are compositionally biased toward low complexity; that stretch reads KPQQAAPVARAADAPKP. The SPOR domain occupies 242-316; the sequence is KKDERRWMVQ…AGHTNCIRLA (75 aa). C252 and C312 are oxidised to a cystine.

The protein belongs to the FtsN family. In terms of assembly, interacts with FtsA via its N-terminal cytoplasmic domain. Interacts with ZapA, FtsQ, FtsW and FtsI.

It localises to the cell inner membrane. Essential cell division protein that activates septal peptidoglycan synthesis and constriction of the cell. Acts on both sides of the membrane, via interaction with FtsA in the cytoplasm and interaction with the FtsQBL complex in the periplasm. These interactions may induce a conformational switch in both FtsA and FtsQBL, leading to septal peptidoglycan synthesis by FtsI and associated synthases. Required for full FtsI activity. Required for recruitment of AmiC to the septal ring. The sequence is that of Cell division protein FtsN from Escherichia coli (strain K12).